The primary structure comprises 572 residues: Dihydroxy-acid dehydratase (572 aa).

C54 contacts [2Fe-2S] cluster. D86 lines the Mg(2+) pocket. C127 contributes to the [2Fe-2S] cluster binding site. Mg(2+)-binding residues include D128 and K129. K129 carries the post-translational modification N6-carboxylysine. C199 is a binding site for [2Fe-2S] cluster. Mg(2+) is bound at residue E449. S475 (proton acceptor) is an active-site residue.

The protein belongs to the IlvD/Edd family. Homodimer. The cofactor is [2Fe-2S] cluster. Requires Mg(2+) as cofactor.

The enzyme catalyses (2R)-2,3-dihydroxy-3-methylbutanoate = 3-methyl-2-oxobutanoate + H2O. The catalysed reaction is (2R,3R)-2,3-dihydroxy-3-methylpentanoate = (S)-3-methyl-2-oxopentanoate + H2O. It functions in the pathway amino-acid biosynthesis; L-isoleucine biosynthesis; L-isoleucine from 2-oxobutanoate: step 3/4. It participates in amino-acid biosynthesis; L-valine biosynthesis; L-valine from pyruvate: step 3/4. In terms of biological role, functions in the biosynthesis of branched-chain amino acids. Catalyzes the dehydration of (2R,3R)-2,3-dihydroxy-3-methylpentanoate (2,3-dihydroxy-3-methylvalerate) into 2-oxo-3-methylpentanoate (2-oxo-3-methylvalerate) and of (2R)-2,3-dihydroxy-3-methylbutanoate (2,3-dihydroxyisovalerate) into 2-oxo-3-methylbutanoate (2-oxoisovalerate), the penultimate precursor to L-isoleucine and L-valine, respectively. The polypeptide is Dihydroxy-acid dehydratase (Pelagibacter ubique (strain HTCC1062)).